Consider the following 533-residue polypeptide: MRLDRRALYALVLLLACASLGLLYASTRDAPGLPNPLALWSPPQGPPRLDLLDLATEPRYAHIPVRIKEQVVGLLAQNNCSCESSGGRFALPFLRQVRAIDFTKAFDAEELRAVSISREQEYQAFLARSRSLADQLLIAPANSPLQYPLQGVEVQPLRSILVPGLSLQEASVQEIYQVNLIASLGTWDVAGEVTGVTLTGEGQSDLTLASPILDKLNRQLQLVTYSSRSYQANTADTVRFSTKGHEVAFTILIRHPPNPRLYPPSSLPQGAQYNISALVTVATKTFLRYDRLRALIASIRRFYPTVTIVIADDSDKPERISDPHVEHYFMPFGKGWFAGRNLAVSQVTTKYVLWVDDDFVFTARTRLEKLVDVLERTPLDLVGGAVREISGYATTYRQLLSVEPGAPGFGNCLRQKQGFHHELAGFPNCVVTDGVVNFFLARTDKVRQVGFDPRLNRVAHLEFFLDGLGSLRVGSCSDVVVDHASKVKLPWTSKDPGAELYARYRYPGSLDQSQVAKHRLLFFKHRLQCMTAE.

At 1-7 (MRLDRRA) the chain is on the cytoplasmic side. A helical; Signal-anchor for type II membrane protein transmembrane segment spans residues 8-25 (LYALVLLLACASLGLLYA). At 26–533 (STRDAPGLPN…KHRLQCMTAE (508 aa)) the chain is on the lumenal side. Asn79 and Asn274 each carry an N-linked (GlcNAc...) asparagine glycan. A disulfide bridge connects residues Cys429 and Cys476.

The protein belongs to the glycosyltransferase 2 family. As to quaternary structure, homodimer; disulfide-linked. In terms of tissue distribution, strongly expressed in brain, testis, spleen, and to a lesser extent in liver.

It is found in the golgi apparatus membrane. The enzyme catalyses a ganglioside GM3 (d18:1(4E)) + UDP-N-acetyl-alpha-D-galactosamine = a ganglioside GM2 (d18:1(4E)) + UDP + H(+). It carries out the reaction a ganglioside GD3 (d18:1(4E)) + UDP-N-acetyl-alpha-D-galactosamine = a ganglioside GD2 (d18:1(4E)) + UDP + H(+). The catalysed reaction is a ganglioside GM3 + UDP-N-acetyl-alpha-D-galactosamine = a ganglioside GM2 + UDP + H(+). It catalyses the reaction a ganglioside GD3 + UDP-N-acetyl-alpha-D-galactosamine = a ganglioside GD2 + UDP + H(+). The enzyme catalyses a ganglioside GD1a + UDP-N-acetyl-alpha-D-galactosamine = a ganglioside GalNAc-GD1a + UDP + H(+). It carries out the reaction a ganglioside GT3 (d18:1(4E)) + UDP-N-acetyl-alpha-D-galactosamine = a ganglioside GT2 (d18:1(4E)) + UDP + H(+). The catalysed reaction is a beta-D-Gal-(1-&gt;4)-beta-D-Glc-(1&lt;-&gt;1)-Cer(d18:1(4E)) + UDP-N-acetyl-alpha-D-galactosamine = a ganglioside GA2 (d18:1(4E)) + UDP + H(+). It catalyses the reaction a neolactoside IV(3)-alpha-NeuGc-nLc4Cer + UDP-N-acetyl-alpha-D-galactosamine = a neolactoside IV(4)-beta-GalNAc-IV(3)-alpha-NeuGc-nLc4Cer + UDP + H(+). Its pathway is sphingolipid metabolism. Functionally, involved in the biosynthesis of gangliosides GM2, GD2, GT2 and GA2 from GM3, GD3, GT3 and GA3, respectively. The protein is Beta-1,4 N-acetylgalactosaminyltransferase 1 of Rattus norvegicus (Rat).